Reading from the N-terminus, the 239-residue chain is Putative transcriptional regulator of 2-aminoethylphosphonate degradation operons (239 aa).

An HTH gntR-type domain is found at 8–76 (IPQYLLIKAQ…DRRGWFVTPE (69 aa)). The segment at residues 36 to 55 (ERELCAIFNTTRITIRESLA) is a DNA-binding region (H-T-H motif).

The polypeptide is Putative transcriptional regulator of 2-aminoethylphosphonate degradation operons (phnR) (Salmonella paratyphi A (strain ATCC 9150 / SARB42)).